The following is a 257-amino-acid chain: Capsid protein (257 aa).

This sequence belongs to the geminiviridae capsid protein family.

Its subcellular location is the virion. Its function is as follows. Encapsidates the viral DNA into characteristic twinned ('geminate') particles. Plays a role in protection of the genome from degradation, virus acquisition and transmission by insect vectors, infectivity, and systemic movement. The protein is Capsid protein of Capsicum annuum (Capsicum pepper).